Consider the following 102-residue polypeptide: Large ribosomal subunit protein bL21 (102 aa).

Belongs to the bacterial ribosomal protein bL21 family. As to quaternary structure, part of the 50S ribosomal subunit. Contacts protein L20.

Its function is as follows. This protein binds to 23S rRNA in the presence of protein L20. In Campylobacter hominis (strain ATCC BAA-381 / DSM 21671 / CCUG 45161 / LMG 19568 / NCTC 13146 / CH001A), this protein is Large ribosomal subunit protein bL21.